The chain runs to 581 residues: NADH-quinone oxidoreductase subunit C/D (581 aa).

The interval 1-172 is NADH dehydrogenase I subunit C; sequence MSAVELVNEL…PPFVMTAARF (172 aa). Positions 196–581 are NADH dehydrogenase I subunit D; it reads ELMILNYGPH…IDYVMSDVDR (386 aa).

It in the N-terminal section; belongs to the complex I 30 kDa subunit family. The protein in the C-terminal section; belongs to the complex I 49 kDa subunit family. As to quaternary structure, NDH-1 is composed of 13 different subunits. Subunits NuoB, CD, E, F, and G constitute the peripheral sector of the complex.

Its subcellular location is the cell inner membrane. The catalysed reaction is a quinone + NADH + 5 H(+)(in) = a quinol + NAD(+) + 4 H(+)(out). Functionally, NDH-1 shuttles electrons from NADH, via FMN and iron-sulfur (Fe-S) centers, to quinones in the respiratory chain. The immediate electron acceptor for the enzyme in this species is believed to be ubiquinone. Couples the redox reaction to proton translocation (for every two electrons transferred, four hydrogen ions are translocated across the cytoplasmic membrane), and thus conserves the redox energy in a proton gradient. The sequence is that of NADH-quinone oxidoreductase subunit C/D from Rhodopseudomonas palustris (strain BisB18).